We begin with the raw amino-acid sequence, 79 residues long: Cell division protein ZapB (79 aa).

Residues 1 to 78 (MSLEALDQLQ…LNSLLGKMDD (78 aa)) adopt a coiled-coil conformation.

This sequence belongs to the ZapB family. As to quaternary structure, homodimer. The ends of the coiled-coil dimer bind to each other, forming polymers. Interacts with FtsZ.

The protein resides in the cytoplasm. In terms of biological role, non-essential, abundant cell division factor that is required for proper Z-ring formation. It is recruited early to the divisome by direct interaction with FtsZ, stimulating Z-ring assembly and thereby promoting cell division earlier in the cell cycle. Its recruitment to the Z-ring requires functional FtsA or ZipA. The protein is Cell division protein ZapB of Hamiltonella defensa subsp. Acyrthosiphon pisum (strain 5AT).